A 579-amino-acid polypeptide reads, in one-letter code: Tetratricopeptide repeat protein 39C (579 aa).

Positions 182-197 (QQGALASDQANHNTST) are enriched in polar residues. Residues 182–202 (QQGALASDQANHNTSTGSGGR) form a disordered region. TPR repeat units lie at residues 311–344 (SLFI…ASDQ), 349–382 (HVCL…SRWS), and 481–514 (GLKH…EYGR).

It belongs to the TTC39 family.

This is Tetratricopeptide repeat protein 39C (ttc39c) from Danio rerio (Zebrafish).